The following is a 132-amino-acid chain: Venom CUB domain-containing protein 2 (132 aa).

An N-terminal signal peptide occupies residues 1–17; the sequence is MKTLFLAIALFSAVALA. Residues 22–129 enclose the CUB domain; it reads ESAELVPGGE…RGFVACKATA (108 aa). Intrachain disulfides connect C66–C125 and C77–C94.

This sequence belongs to the venom CUB family. As to expression, expressed by the venom gland (posterior main gland) (at protein level).

The protein resides in the secreted. This is Venom CUB domain-containing protein 2 from Platymeris rhadamanthus (Red spot assassin bug).